The primary structure comprises 334 residues: Dihydroorotate dehydrogenase (quinone) (334 aa).

FMN contacts are provided by residues 61-65 (AGLDK) and Thr85. Residue Lys65 coordinates substrate. 110-114 (NRMGF) serves as a coordination point for substrate. Asn138 and Asn171 together coordinate FMN. Asn171 serves as a coordination point for substrate. The active-site Nucleophile is Ser174. Asn176 contributes to the substrate binding site. FMN-binding residues include Lys216 and Thr244. 245–246 (NT) lines the substrate pocket. FMN is bound by residues Gly266, Gly295, and 316–317 (YT).

This sequence belongs to the dihydroorotate dehydrogenase family. Type 2 subfamily. Monomer. FMN is required as a cofactor.

It is found in the cell membrane. The enzyme catalyses (S)-dihydroorotate + a quinone = orotate + a quinol. It participates in pyrimidine metabolism; UMP biosynthesis via de novo pathway; orotate from (S)-dihydroorotate (quinone route): step 1/1. In terms of biological role, catalyzes the conversion of dihydroorotate to orotate with quinone as electron acceptor. This chain is Dihydroorotate dehydrogenase (quinone), found in Idiomarina loihiensis (strain ATCC BAA-735 / DSM 15497 / L2-TR).